Here is a 319-residue protein sequence, read N- to C-terminus: ATP-dependent 6-phosphofructokinase (319 aa).

Position 11 (Gly11) interacts with ATP. Position 21–25 (Arg21–Arg25) interacts with ADP. Residues Arg72–Cys73 and Gly102–Ser105 each bind ATP. Asp103 provides a ligand contact to Mg(2+). Thr125–Asp127 contributes to the substrate binding site. Catalysis depends on Asp127, which acts as the Proton acceptor. ADP is bound at residue Arg154. Substrate-binding positions include Arg162 and Met169–Arg171. Residues Gly185–Glu187, Arg211, and Lys213–His215 each bind ADP. Substrate contacts are provided by residues Glu222, Arg243, and His249–Arg252.

The protein belongs to the phosphofructokinase type A (PFKA) family. ATP-dependent PFK group I subfamily. Prokaryotic clade 'B1' sub-subfamily. As to quaternary structure, homotetramer. It depends on Mg(2+) as a cofactor.

The protein resides in the cytoplasm. The enzyme catalyses beta-D-fructose 6-phosphate + ATP = beta-D-fructose 1,6-bisphosphate + ADP + H(+). It functions in the pathway carbohydrate degradation; glycolysis; D-glyceraldehyde 3-phosphate and glycerone phosphate from D-glucose: step 3/4. Its activity is regulated as follows. Allosterically activated by ADP and other diphosphonucleosides, and allosterically inhibited by phosphoenolpyruvate. In terms of biological role, catalyzes the phosphorylation of D-fructose 6-phosphate to fructose 1,6-bisphosphate by ATP, the first committing step of glycolysis. The polypeptide is ATP-dependent 6-phosphofructokinase (Bacillus anthracis (strain A0248)).